The sequence spans 937 residues: Putative leucine-rich repeat receptor-like serine/threonine-protein kinase At3g53590 (937 aa).

A signal peptide spans 1–20 (MIPPNINVLIRSICINLVTS). Topologically, residues 21 to 547 (LPLNFAYIFI…LLAQTSGIRT (527 aa)) are extracellular. N50, N63, N90, and N114 each carry an N-linked (GlcNAc...) asparagine glycan. LRR repeat units lie at residues 102-126 (LLYLEILDVMWNNLTGRIPLEIGRI), 127-150 (SSLKLLLLNGNKFTGSLPPELGNL), 152-173 (NLNRLQVDENNITGSVPFSFGN), 174-198 (LRSIKHLHLNNNTISGEIPVELSKL), 200-222 (KLVHMILDNNNLTGTLPLELAQL), 223-249 (PSLTILQLDNNNFEGSTIPEAYGHFSR), 251-270 (VKLSLRNCGLQGSIPDLSRI), and 271-294 (ENLSYLDLSWNHLTGTIPESKLSD). Residues N162, N184, and N210 are each glycosylated (N-linked (GlcNAc...) asparagine). N-linked (GlcNAc...) asparagine glycans are attached at residues N272 and N295. LRR repeat units follow at residues 296–316 (MTTIELSYNHLTGSIPQSFSD), 317–341 (LNSLQLLSLENNSLSGSVPTEIWQD), and 343–360 (SFENNKLQVYDLNNNFSD). Residues N327, N357, N370, N413, N499, and N516 are each glycosylated (N-linked (GlcNAc...) asparagine). A helical transmembrane segment spans residues 548–568 (IVWMMIVAGSVVAATVLSVTA). Residues 569-937 (TLLYVRKRRE…SGFFHAVKPR (369 aa)) lie on the Cytoplasmic side of the membrane. Residues 614 to 886 (FDSSTLIGRG…SKVVKELEGI (273 aa)) form the Protein kinase domain. ATP contacts are provided by residues 620-628 (IGRGSYGKV) and K642. Catalysis depends on D738, which acts as the Proton acceptor.

This sequence belongs to the protein kinase superfamily. Ser/Thr protein kinase family.

The protein localises to the cell membrane. The catalysed reaction is L-seryl-[protein] + ATP = O-phospho-L-seryl-[protein] + ADP + H(+). It carries out the reaction L-threonyl-[protein] + ATP = O-phospho-L-threonyl-[protein] + ADP + H(+). This is Putative leucine-rich repeat receptor-like serine/threonine-protein kinase At3g53590 from Arabidopsis thaliana (Mouse-ear cress).